The chain runs to 288 residues: Alpha/beta hydrolase domain-containing protein 17B (288 aa).

Catalysis depends on charge relay system residues Ser-170, Asp-235, and His-264.

Belongs to the AB hydrolase superfamily. ABHD17 family. Post-translationally, palmitoylated on cysteine residues located in a cysteine cluster at the N-terminus which promotes membrane localization.

The protein localises to the cell membrane. The protein resides in the recycling endosome membrane. It is found in the cell projection. It localises to the dendritic spine. Its subcellular location is the postsynaptic density membrane. The catalysed reaction is S-hexadecanoyl-L-cysteinyl-[protein] + H2O = L-cysteinyl-[protein] + hexadecanoate + H(+). In terms of biological role, hydrolyzes fatty acids from S-acylated cysteine residues in proteins. The chain is Alpha/beta hydrolase domain-containing protein 17B from Xenopus tropicalis (Western clawed frog).